Here is a 382-residue protein sequence, read N- to C-terminus: MSSYRPYQSIERRKSRQIHVGKVPVGGDAPISVQTMTNTLTTDAEATIAQIRRAELAGVDIVRVSCPDEESTAALAEIVREVNVPIVADIHFHYKRAIEAAQAGAACLRINPGNIGSAERVREVVKAAREHGCSIRIGVNAGSLEKHLLEKYGEPNPDALVESALEHAKILQDHDFHEFKISVKASDVFLAVAAYQQLAEVCDHPLHIGITEAGSKRAGTVKSSIGLGNLLWAGVGDTMRVSLSADPEEEVLVGWDILKSLGLRHRGVKIISCPSCARQGFNVIQTVQTLEERLAHIQTPLTLSIIGCVVNGPGEALMTDIGVTGGGSGRHMVYAAGRQDHTVPADSMIEHIVELVEKKAEILRAEEAAAKAEAEAALAPAQ.

Residues Cys273, Cys276, Cys308, and Glu315 each coordinate [4Fe-4S] cluster.

This sequence belongs to the IspG family. [4Fe-4S] cluster is required as a cofactor.

The enzyme catalyses (2E)-4-hydroxy-3-methylbut-2-enyl diphosphate + oxidized [flavodoxin] + H2O + 2 H(+) = 2-C-methyl-D-erythritol 2,4-cyclic diphosphate + reduced [flavodoxin]. It participates in isoprenoid biosynthesis; isopentenyl diphosphate biosynthesis via DXP pathway; isopentenyl diphosphate from 1-deoxy-D-xylulose 5-phosphate: step 5/6. In terms of biological role, converts 2C-methyl-D-erythritol 2,4-cyclodiphosphate (ME-2,4cPP) into 1-hydroxy-2-methyl-2-(E)-butenyl 4-diphosphate. This is 4-hydroxy-3-methylbut-2-en-1-yl diphosphate synthase (flavodoxin) from Gluconacetobacter diazotrophicus (strain ATCC 49037 / DSM 5601 / CCUG 37298 / CIP 103539 / LMG 7603 / PAl5).